Here is a 214-residue protein sequence, read N- to C-terminus: Osteoclast-stimulating factor 1 (214 aa).

An N-acetylserine modification is found at S2. Positions 12–71 (GQVKVFRALYTFEPRTPDELYFEEGDIIYITDMSDTNWWKGTCKGRTGLIPSNYVAEQAE) constitute an SH3 domain. ANK repeat units follow at residues 72–101 (SIDN…GVNG), 105–135 (AGST…ELNQ), and 139–168 (LGDT…RTDL). S202 and S213 each carry phosphoserine.

Interacts with SRC and SMN1. Interacts with FASLG.

The protein resides in the cytoplasm. In terms of biological role, induces bone resorption, acting probably through a signaling cascade which results in the secretion of factor(s) enhancing osteoclast formation and activity. The polypeptide is Osteoclast-stimulating factor 1 (OSTF1) (Bos taurus (Bovine)).